The chain runs to 185 residues: Ovomucoid (185 aa).

Kazal-like domains follow at residues 1–63 (VEVD…ECRE), 64–128 (AVPM…ECRK), and 131–185 (AAVS…FGKC). 9 disulfides stabilise this stretch: Cys-5-Cys-43, Cys-22-Cys-40, Cys-30-Cys-61, Cys-69-Cys-108, Cys-86-Cys-105, Cys-94-Cys-126, Cys-137-Cys-167, Cys-145-Cys-164, and Cys-153-Cys-185. A glycan (N-linked (GlcNAc...) asparagine) is linked at Asn-174.

It localises to the secreted. The chain is Ovomucoid from Meleagris gallopavo (Wild turkey).